We begin with the raw amino-acid sequence, 528 residues long: G protein-coupled receptor 161 (528 aa).

Residues Met-1–Glu-30 are Extracellular-facing. Residues Asn-4 and Asn-15 are each glycosylated (N-linked (GlcNAc...) asparagine). The chain crosses the membrane as a helical span at residues Phe-31–Thr-51. Over Leu-52 to Lys-64 the chain is Cytoplasmic. A helical membrane pass occupies residues Phe-65–Val-85. At Thr-86–Asn-101 the chain is on the extracellular side. A disulfide bridge links Cys-100 with Cys-178. Residue Asn-101 is glycosylated (N-linked (GlcNAc...) asparagine). Residues Phe-102–Ala-122 traverse the membrane as a helical segment. Residues Val-123–Arg-143 are Cytoplasmic-facing. The chain crosses the membrane as a helical span at residues Ala-144 to Phe-164. The Extracellular portion of the chain corresponds to Gly-165 to Ala-190. A helical transmembrane segment spans residues Phe-191–Ile-211. Residues Phe-212–Leu-269 are Cytoplasmic-facing. Residues Val-270–Ile-290 traverse the membrane as a helical segment. Over Thr-291–Glu-306 the chain is Extracellular. Residues Thr-307–Trp-327 form a helical membrane-spanning segment. Over Asn-328–Arg-528 the chain is Cytoplasmic.

The protein belongs to the G-protein coupled receptor 1 family.

The protein localises to the cell projection. It localises to the cilium membrane. It is found in the cell membrane. In terms of biological role, key negative regulator of Shh signaling, which promotes the processing of GLI3 into GLI3R during neural tube development. Recruited by TULP3 and the IFT-A complex to primary cilia and acts as a regulator of the PKA-dependent basal repression machinery in Shh signaling by increasing cAMP levels, leading to promote the PKA-dependent processing of GLI3 into GLI3R and repress the Shh signaling. In presence of SHH, it is removed from primary cilia and is internalized into recycling endosomes, preventing its activity and allowing activation of the Shh signaling. Its ligand is unknown. This chain is G protein-coupled receptor 161 (GPR161), found in Bos taurus (Bovine).